A 229-amino-acid polypeptide reads, in one-letter code: Thiamine import ATP-binding protein ThiQ (229 aa).

One can recognise an ABC transporter domain in the interval 2 to 229 (LHLENIRVRQ…NNAEPLRPWM (228 aa)). 32–39 (GASGSGKS) contributes to the ATP binding site.

The protein belongs to the ABC transporter superfamily. Thiamine importer (TC 3.A.1.19.1) family. As to quaternary structure, the complex is composed of two ATP-binding proteins (ThiQ), two transmembrane proteins (ThiP) and a solute-binding protein (ThiB).

The protein localises to the cell inner membrane. It carries out the reaction thiamine(out) + ATP + H2O = thiamine(in) + ADP + phosphate + H(+). Part of the ABC transporter complex ThiBPQ involved in thiamine import. Responsible for energy coupling to the transport system. This chain is Thiamine import ATP-binding protein ThiQ, found in Jannaschia sp. (strain CCS1).